We begin with the raw amino-acid sequence, 387 residues long: Galactokinase (387 aa).

Position 32–35 (glutamate 32–aspartate 35) interacts with substrate. ATP is bound by residues serine 66 and glycine 123–serine 129. 2 residues coordinate Mg(2+): serine 129 and glutamate 161. The active-site Proton acceptor is the aspartate 173. Residue tyrosine 223 coordinates substrate.

The protein belongs to the GHMP kinase family. GalK subfamily.

Its subcellular location is the cytoplasm. It catalyses the reaction alpha-D-galactose + ATP = alpha-D-galactose 1-phosphate + ADP + H(+). It functions in the pathway carbohydrate metabolism; galactose metabolism. Catalyzes the transfer of the gamma-phosphate of ATP to D-galactose to form alpha-D-galactose-1-phosphate (Gal-1-P). This chain is Galactokinase, found in Enterococcus faecalis (strain ATCC 700802 / V583).